The sequence spans 392 residues: GTPase Obg (392 aa).

The region spanning Met-1–Leu-159 is the Obg domain. Residues Ala-160 to Glu-333 form the OBG-type G domain. GTP contacts are provided by residues Gly-166–Ser-173, Phe-191–Val-195, Asp-213–Gly-216, Asn-283–Asp-286, and Ser-314–Ala-316. Mg(2+) is bound by residues Ser-173 and Thr-193. The segment at Ser-361 to Pro-392 is disordered. Over residues Phe-365–Val-386 the composition is skewed to acidic residues.

Belongs to the TRAFAC class OBG-HflX-like GTPase superfamily. OBG GTPase family. In terms of assembly, monomer. The cofactor is Mg(2+).

The protein resides in the cytoplasm. An essential GTPase which binds GTP, GDP and possibly (p)ppGpp with moderate affinity, with high nucleotide exchange rates and a fairly low GTP hydrolysis rate. Plays a role in control of the cell cycle, stress response, ribosome biogenesis and in those bacteria that undergo differentiation, in morphogenesis control. The polypeptide is GTPase Obg (Histophilus somni (strain 2336) (Haemophilus somnus)).